The primary structure comprises 425 residues: MAMMHPPQPPQGSYHHPQTLEEVRTLWIGDLQYWVDENYLTSCFSQTGELVSVKVIRNKITGQPEGYGFIEFISHAAAERTLQTYNGTQMPGTELTFRLNWASFGSGQKVDAGPDHSIFVGDLAPDVTDYLLQETFRVHYSSVRGAKVVTDPSTGRSKGYGFVKFAEESERNRAMAEMNGLYCSTRPMRISAATPKKNVGVQQQYVTKAVYPVTVPSAVAAPVQAYVAPPESDVTCTTISVANLDQNVTEEELKKAFSQLGEVIYVKIPATKGYGYVQFKTRPSAEEAVQRMQGQVIGQQAVRISWSKNPGQDGWVTQADPNQWNGYYGYGQGYDAYAYGATQDPSVYAYGGYGYPQYPQQGEGTQDISNSAAGGVAGAEQELYDPLATPDVDKLNAAYLSVHASAILGRPMWQRTSSLTSQLGK.

3 RRM domains span residues 24 to 102 (RTLW…LNWA), 116 to 195 (HSIF…AATP), and 237 to 309 (TTIS…WSKN).

Belongs to the polyadenylate-binding RBP47 family. Interacts with the poly(A) tail of mRNA in nucleus.

It localises to the nucleus. It is found in the cytoplasmic granule. Heterogeneous nuclear ribonucleoprotein (hnRNP)-protein binding the poly(A) tail of mRNA and probably involved in some steps of pre-mRNA maturation. This chain is Polyadenylate-binding protein RBP47B' (RBP47B'), found in Arabidopsis thaliana (Mouse-ear cress).